A 228-amino-acid polypeptide reads, in one-letter code: Cytochrome c oxidase subunit 2 (228 aa).

The Mitochondrial intermembrane segment spans residues 1–26; the sequence is MATWANLGLQNSSSPLMEQLNFFHDH. A helical membrane pass occupies residues 27-48; sequence TLLILIMITVMIAYIMFMLFFN. At 49-62 the chain is on the mitochondrial matrix side; sequence KFTNRYLLHGQTIE. The chain crosses the membrane as a helical span at residues 63 to 82; sequence IIWTILPAIILMFIAFPSLR. At 83–228 the chain is on the mitochondrial intermembrane side; it reads LLYLMDEINS…FIKWISSQMN (146 aa). Residues histidine 161, cysteine 196, glutamate 198, cysteine 200, histidine 204, and methionine 207 each coordinate Cu cation. Residue glutamate 198 participates in Mg(2+) binding.

This sequence belongs to the cytochrome c oxidase subunit 2 family. Component of the cytochrome c oxidase (complex IV, CIV), a multisubunit enzyme composed of a catalytic core of 3 subunits and several supernumerary subunits. The complex exists as a monomer or a dimer and forms supercomplexes (SCs) in the inner mitochondrial membrane with ubiquinol-cytochrome c oxidoreductase (cytochrome b-c1 complex, complex III, CIII). It depends on Cu cation as a cofactor.

Its subcellular location is the mitochondrion inner membrane. It carries out the reaction 4 Fe(II)-[cytochrome c] + O2 + 8 H(+)(in) = 4 Fe(III)-[cytochrome c] + 2 H2O + 4 H(+)(out). In terms of biological role, component of the cytochrome c oxidase, the last enzyme in the mitochondrial electron transport chain which drives oxidative phosphorylation. The respiratory chain contains 3 multisubunit complexes succinate dehydrogenase (complex II, CII), ubiquinol-cytochrome c oxidoreductase (cytochrome b-c1 complex, complex III, CIII) and cytochrome c oxidase (complex IV, CIV), that cooperate to transfer electrons derived from NADH and succinate to molecular oxygen, creating an electrochemical gradient over the inner membrane that drives transmembrane transport and the ATP synthase. Cytochrome c oxidase is the component of the respiratory chain that catalyzes the reduction of oxygen to water. Electrons originating from reduced cytochrome c in the intermembrane space (IMS) are transferred via the dinuclear copper A center (CU(A)) of subunit 2 and heme A of subunit 1 to the active site in subunit 1, a binuclear center (BNC) formed by heme A3 and copper B (CU(B)). The BNC reduces molecular oxygen to 2 water molecules using 4 electrons from cytochrome c in the IMS and 4 protons from the mitochondrial matrix. The sequence is that of Cytochrome c oxidase subunit 2 (COII) from Aedes aegypti (Yellowfever mosquito).